Consider the following 339-residue polypeptide: RNA 3'-terminal phosphate cyclase (339 aa).

ATP is bound by residues Gln103 and 283 to 287; that span reads HLADQ. The Tele-AMP-histidine intermediate role is filled by His308.

The protein belongs to the RNA 3'-terminal cyclase family. Type 1 subfamily.

It localises to the cytoplasm. It catalyses the reaction a 3'-end 3'-phospho-ribonucleotide-RNA + ATP = a 3'-end 2',3'-cyclophospho-ribonucleotide-RNA + AMP + diphosphate. Its function is as follows. Catalyzes the conversion of 3'-phosphate to a 2',3'-cyclic phosphodiester at the end of RNA. The mechanism of action of the enzyme occurs in 3 steps: (A) adenylation of the enzyme by ATP; (B) transfer of adenylate to an RNA-N3'P to produce RNA-N3'PP5'A; (C) and attack of the adjacent 2'-hydroxyl on the 3'-phosphorus in the diester linkage to produce the cyclic end product. The biological role of this enzyme is unknown but it is likely to function in some aspects of cellular RNA processing. This is RNA 3'-terminal phosphate cyclase from Salmonella typhimurium (strain LT2 / SGSC1412 / ATCC 700720).